Reading from the N-terminus, the 76-residue chain is Serine proteinase inhibitor IA-1 (76 aa).

At Ser-1 the chain carries N-acetylserine.

The protein belongs to the protease inhibitor I9 family.

Its function is as follows. Specifically inhibits an endogenous intracellular serine proteinase (proteinase A). This is Serine proteinase inhibitor IA-1 from Pleurotus ostreatus (Oyster mushroom).